Consider the following 332-residue polypeptide: Ketol-acid reductoisomerase (NADP(+)) (332 aa).

The region spanning 1–182 (MAVIYYDKDC…GSNRAGILET (182 aa)) is the KARI N-terminal Rossmann domain. Residues 25–28 (YGAQ) and 83–86 (DTSQ) contribute to the NADP(+) site. H108 is a catalytic residue. G134 contacts NADP(+). Positions 183–328 (TFAEETETDL…AELRSMMSWL (146 aa)) constitute a KARI C-terminal knotted domain. Residues D191, E195, E227, and E231 each contribute to the Mg(2+) site. S252 serves as a coordination point for substrate.

It belongs to the ketol-acid reductoisomerase family. Mg(2+) serves as cofactor.

The enzyme catalyses (2R)-2,3-dihydroxy-3-methylbutanoate + NADP(+) = (2S)-2-acetolactate + NADPH + H(+). It carries out the reaction (2R,3R)-2,3-dihydroxy-3-methylpentanoate + NADP(+) = (S)-2-ethyl-2-hydroxy-3-oxobutanoate + NADPH + H(+). It participates in amino-acid biosynthesis; L-isoleucine biosynthesis; L-isoleucine from 2-oxobutanoate: step 2/4. It functions in the pathway amino-acid biosynthesis; L-valine biosynthesis; L-valine from pyruvate: step 2/4. Functionally, involved in the biosynthesis of branched-chain amino acids (BCAA). Catalyzes an alkyl-migration followed by a ketol-acid reduction of (S)-2-acetolactate (S2AL) to yield (R)-2,3-dihydroxy-isovalerate. In the isomerase reaction, S2AL is rearranged via a Mg-dependent methyl migration to produce 3-hydroxy-3-methyl-2-ketobutyrate (HMKB). In the reductase reaction, this 2-ketoacid undergoes a metal-dependent reduction by NADPH to yield (R)-2,3-dihydroxy-isovalerate. In Dehalococcoides mccartyi (strain ATCC BAA-2100 / JCM 16839 / KCTC 5957 / BAV1), this protein is Ketol-acid reductoisomerase (NADP(+)).